The following is a 303-amino-acid chain: Dihydroorotate dehydrogenase B (NAD(+)), catalytic subunit (303 aa).

FMN-binding positions include Ser21 and 45 to 46; that span reads KG. Substrate-binding positions include Lys45 and 69-73; that span reads NSIGL. Residues Asn99 and Asn127 each coordinate FMN. Asn127 contacts substrate. Cys130 serves as the catalytic Nucleophile. FMN is bound by residues Lys165 and Ile191. 192–193 provides a ligand contact to substrate; sequence NT. FMN-binding positions include Gly217, 243 to 244, and 265 to 266; these read GG and GT.

Belongs to the dihydroorotate dehydrogenase family. Type 1 subfamily. As to quaternary structure, heterotetramer of 2 PyrK and 2 PyrD type B subunits. The cofactor is FMN.

Its subcellular location is the cytoplasm. It catalyses the reaction (S)-dihydroorotate + NAD(+) = orotate + NADH + H(+). The protein operates within pyrimidine metabolism; UMP biosynthesis via de novo pathway; orotate from (S)-dihydroorotate (NAD(+) route): step 1/1. Its function is as follows. Catalyzes the conversion of dihydroorotate to orotate with NAD(+) as electron acceptor. In Thermodesulfovibrio yellowstonii (strain ATCC 51303 / DSM 11347 / YP87), this protein is Dihydroorotate dehydrogenase B (NAD(+)), catalytic subunit (pyrD).